Here is a 158-residue protein sequence, read N- to C-terminus: NAD(P)H-quinone oxidoreductase subunit J, chloroplastic (158 aa).

It belongs to the complex I 30 kDa subunit family. In terms of assembly, NDH is composed of at least 16 different subunits, 5 of which are encoded in the nucleus.

The protein resides in the plastid. It is found in the chloroplast thylakoid membrane. It catalyses the reaction a plastoquinone + NADH + (n+1) H(+)(in) = a plastoquinol + NAD(+) + n H(+)(out). It carries out the reaction a plastoquinone + NADPH + (n+1) H(+)(in) = a plastoquinol + NADP(+) + n H(+)(out). Functionally, NDH shuttles electrons from NAD(P)H:plastoquinone, via FMN and iron-sulfur (Fe-S) centers, to quinones in the photosynthetic chain and possibly in a chloroplast respiratory chain. The immediate electron acceptor for the enzyme in this species is believed to be plastoquinone. Couples the redox reaction to proton translocation, and thus conserves the redox energy in a proton gradient. The polypeptide is NAD(P)H-quinone oxidoreductase subunit J, chloroplastic (Lupinus luteus (European yellow lupine)).